The primary structure comprises 77 residues: Large ribosomal subunit protein bL28 (77 aa).

It belongs to the bacterial ribosomal protein bL28 family.

The chain is Large ribosomal subunit protein bL28 from Laribacter hongkongensis (strain HLHK9).